An 836-amino-acid chain; its full sequence is Transcription factor vrtR2 (836 aa).

Polar residues predominate over residues 1-26; that stretch reads MPSLSSKTSTMQRSCRPQMSACPNQQ. The segment at 1-29 is disordered; sequence MPSLSSKTSTMQRSCRPQMSACPNQQQKD. The segment at residues 37-63 is a DNA-binding region (zn(2)-C6 fungal-type); the sequence is CVLCRDRKLKCDKLDPCSNCTSSGVAC. Positions 72–114 are disordered; that stretch reads PRGRHARTVQTKASTPPDTRRRGSSNESTTAPAPDDGGLGTHI. Residues 79–88 show a composition bias toward polar residues; that stretch reads TVQTKASTPP.

It is found in the nucleus. Probable transcription factor that regulates expression of the gene cluster that mediates the biosynthesis of viridicatumtoxin, a tetracycline-like fungal meroterpenoid with a unique, fused spirobicyclic ring system. The sequence is that of Transcription factor vrtR2 from Penicillium aethiopicum.